We begin with the raw amino-acid sequence, 483 residues long: Pentatricopeptide repeat-containing protein At5g18950 (483 aa).

PPR repeat units follow at residues 144–178 (EPTL…GISS), 179–213 (SVVT…EFDS), 218–246 (CLIR…GLDP), 247–281 (GQYV…NHFP), 282–316 (SMYI…GYAP), 317–351 (DRVV…GMRP), 352–386 (NEFA…GYGG), 387–421 (TMLS…GVTP), and 422–456 (NAIT…GLKP).

This sequence belongs to the PPR family. P subfamily.

This Arabidopsis thaliana (Mouse-ear cress) protein is Pentatricopeptide repeat-containing protein At5g18950.